The primary structure comprises 132 residues: Rubredoxin-1 (132 aa).

The Rubredoxin-like domain occupies 1-53; that stretch reads MSRYQCPDCQYIYDENKGEPHEGFHPNTSWNDIPKDWACPDCAVRDKVDFIFL. Residues C6, C9, C39, and C42 each contribute to the Fe cation site. A disordered region spans residues 108-132; it reads TEVLDQASTPQVVRKSSTRKKMRNK. The segment covering 113–122 has biased composition (polar residues); sequence QASTPQVVRK. The span at 123 to 132 shows a compositional bias: basic residues; that stretch reads SSTRKKMRNK.

The protein belongs to the rubredoxin family. Requires Fe(3+) as cofactor.

The protein resides in the cytoplasm. The protein operates within hydrocarbon metabolism; alkane degradation. Functionally, not known. Probably involved in an electron transport pathway, but not required for the hydrocarbon hydroxylating system. Seems to be non-functional. In Ectopseudomonas oleovorans (Pseudomonas oleovorans), this protein is Rubredoxin-1 (alkF).